We begin with the raw amino-acid sequence, 173 residues long: Mesencephalic astrocyte-derived neurotrophic factor homolog (173 aa).

The N-terminal stretch at 1–22 is a signal peptide; that stretch reads MKTTHLVLVLCFLAGVAQTTLA. 4 disulfides stabilise this stretch: cysteine 28–cysteine 114, cysteine 31–cysteine 103, cysteine 61–cysteine 72, and cysteine 148–cysteine 151.

This sequence belongs to the ARMET family.

It localises to the secreted. Its function is as follows. Required during the maturation of the embryonic nervous system for maintenance of neuronal and cuticular connectivity. Essential for maintenance of dopaminergic neurons and dopamine levels. This chain is Mesencephalic astrocyte-derived neurotrophic factor homolog, found in Drosophila persimilis (Fruit fly).